The following is a 322-amino-acid chain: Probable 5-dehydro-4-deoxyglucarate dehydratase 2 (322 aa).

Belongs to the DapA family.

The catalysed reaction is 5-dehydro-4-deoxy-D-glucarate + H(+) = 2,5-dioxopentanoate + CO2 + H2O. Its pathway is carbohydrate acid metabolism; D-glucarate degradation; 2,5-dioxopentanoate from D-glucarate: step 2/2. This chain is Probable 5-dehydro-4-deoxyglucarate dehydratase 2, found in Streptomyces coelicolor (strain ATCC BAA-471 / A3(2) / M145).